We begin with the raw amino-acid sequence, 529 residues long: Probable pectinesterase/pectinesterase inhibitor 35 (529 aa).

Positions 1–34 are cleaved as a signal peptide; that stretch reads MATTSFSLPNHKFGIKLMLFLVLNLLSLQTSVFA. The segment at 36-180 is pectinesterase inhibitor 35; that stretch reads SSNSKFTKIS…TGLLTNSLDM (145 aa). The disordered stretch occupies residues 42-64; it reads TKISRHPNSDSSSRTKPSTSSNK. Low complexity predominate over residues 50 to 64; that stretch reads SDSSSRTKPSTSSNK. 3 N-linked (GlcNAc...) asparagine glycosylation sites follow: Asn-86, Asn-169, and Asn-193. The segment at 228–514 is pectinesterase 35; that stretch reads HAVVAADGSG…FTVSGFIDGN (287 aa). 2 residues coordinate substrate: Thr-302 and Gln-332. Asp-355 acts as the Proton donor; for pectinesterase activity in catalysis. Residue Asp-376 is the Nucleophile; for pectinesterase activity of the active site. Substrate-binding residues include Arg-434 and Trp-436.

This sequence in the N-terminal section; belongs to the PMEI family. The protein in the C-terminal section; belongs to the pectinesterase family. Expressed in siliques.

The protein resides in the secreted. Its subcellular location is the cell wall. It catalyses the reaction [(1-&gt;4)-alpha-D-galacturonosyl methyl ester](n) + n H2O = [(1-&gt;4)-alpha-D-galacturonosyl](n) + n methanol + n H(+). It participates in glycan metabolism; pectin degradation; 2-dehydro-3-deoxy-D-gluconate from pectin: step 1/5. Acts in the modification of cell walls via demethylesterification of cell wall pectin. The polypeptide is Probable pectinesterase/pectinesterase inhibitor 35 (PME35) (Arabidopsis thaliana (Mouse-ear cress)).